The primary structure comprises 423 residues: Phospholipase A1-IIalpha (423 aa).

Residues 194-217 (SAQEQVQGELKRLLELYKDEEISI) are a coiled coil. Ser223 functions as the Acyl-ester intermediate in the catalytic mechanism. Catalysis depends on charge relay system residues Ser223, Asp290, and His327. The interval 399–423 (HDDDVDADDNDDSSTSNQLQELNTD) is disordered. Residues 401 to 410 (DDVDADDNDD) show a composition bias toward acidic residues. Over residues 411 to 423 (SSTSNQLQELNTD) the composition is skewed to polar residues.

The protein belongs to the AB hydrolase superfamily. Lipase family.

The protein localises to the cytoplasm. Functionally, acylhydrolase that catalyzes the hydrolysis of phospholipids at the sn-1 position. This is Phospholipase A1-IIalpha from Arabidopsis thaliana (Mouse-ear cress).